The primary structure comprises 90 residues: Probable Fe(2+)-trafficking protein (90 aa).

Belongs to the Fe(2+)-trafficking protein family.

Its function is as follows. Could be a mediator in iron transactions between iron acquisition and iron-requiring processes, such as synthesis and/or repair of Fe-S clusters in biosynthetic enzymes. This is Probable Fe(2+)-trafficking protein from Ectopseudomonas mendocina (strain ymp) (Pseudomonas mendocina).